A 297-amino-acid chain; its full sequence is Thiosulfate sulfurtransferase (297 aa).

Position 14 is an N6-acetyllysine; alternate (K14). K14 is modified (N6-succinyllysine; alternate). Residues 25–143 enclose the Rhodanese 1 domain; that stretch reads LGPGLRVLDA…WLKEGHPVTS (119 aa). S35 is a glycosylation site (O-linked (GlcNAc) serine). S38 carries the post-translational modification Phosphoserine. K136 bears the N6-acetyllysine; alternate mark. K136 is modified (N6-succinyllysine; alternate). A hinge region spans residues 144-159; that stretch reads EPSRPEPAVFKATLDR. N6-acetyllysine is present on K163. The Rhodanese 2 domain maps to 173 to 288; sequence QSKRFQLVDS…WFHQAPPETR (116 aa). K175 bears the N6-acetyllysine; alternate mark. Position 175 is an N6-succinyllysine; alternate (K175). R187 contacts substrate. K224 is modified (N6-acetyllysine; alternate). K224 is subject to N6-succinyllysine; alternate. K236 carries the post-translational modification N6-acetyllysine. K237 is modified (N6-acetyllysine; alternate). N6-succinyllysine; alternate is present on K237. Residue C248 is the Cysteine persulfide intermediate of the active site. Substrate is bound at residue K250.

In terms of assembly, monomer.

Its subcellular location is the mitochondrion matrix. It catalyses the reaction thiosulfate + hydrogen cyanide = thiocyanate + sulfite + 2 H(+). Functionally, together with MRPL18, acts as a mitochondrial import factor for the cytosolic 5S rRNA. Only the nascent unfolded cytoplasmic form is able to bind to the 5S rRNA. Formation of iron-sulfur complexes and cyanide detoxification. Binds molecular oxygen and sulfur. This Cricetulus griseus (Chinese hamster) protein is Thiosulfate sulfurtransferase (TST).